The sequence spans 1871 residues: Callose synthase 4 (1871 aa).

Over M1–R491 the chain is Cytoplasmic. The chain crosses the membrane as a helical span at residues M492–S512. Over E513–K521 the chain is Extracellular. The helical transmembrane segment at V522–A542 threads the bilayer. Over L543 to R558 the chain is Cytoplasmic. Residues Y559–Y579 form a helical membrane-spanning segment. Topologically, residues S580–S583 are extracellular. The chain crosses the membrane as a helical span at residues I584–L604. Residues I605 to S640 lie on the Cytoplasmic side of the membrane. The chain crosses the membrane as a helical span at residues A641–F661. The Extracellular portion of the chain corresponds to S662–V701. The chain crosses the membrane as a helical span at residues V702–V724. Residues S725–Y1441 lie on the Cytoplasmic side of the membrane. A helical transmembrane segment spans residues F1442–L1462. The Extracellular segment spans residues Y1463 to E1485. A helical transmembrane segment spans residues I1486 to M1506. The Cytoplasmic portion of the chain corresponds to E1507–D1516. Residues A1517–L1537 traverse the membrane as a helical segment. At G1538–H1580 the chain is on the extracellular side. 2 consecutive transmembrane segments (helical) span residues F1581–Y1601 and I1602–L1622. Residues F1623 to K1675 are Extracellular-facing. The helical transmembrane segment at W1676 to V1696 threads the bilayer. Residues Y1697–S1708 are Cytoplasmic-facing. The helical transmembrane segment at L1709–L1729 threads the bilayer. Over D1730–Q1741 the chain is Extracellular. Residues L1742 to L1762 form a helical membrane-spanning segment. Topologically, residues M1763–D1772 are cytoplasmic. A helical transmembrane segment spans residues V1773 to S1793. At C1794–D1815 the chain is on the extracellular side. Residues L1816–S1836 traverse the membrane as a helical segment. Over E1837–D1871 the chain is Cytoplasmic.

The protein belongs to the glycosyltransferase 48 family.

It is found in the cell membrane. The enzyme catalyses [(1-&gt;3)-beta-D-glucosyl](n) + UDP-alpha-D-glucose = [(1-&gt;3)-beta-D-glucosyl](n+1) + UDP + H(+). Its function is as follows. Involved in callose synthesis at the forming cell plate during cytokinesis. During plant growth and development, callose is found as a transitory component of the cell plate in dividing cells, is a major component of pollen mother cell walls and pollen tubes, and is found as a structural component of plasmodesmatal canals. The polypeptide is Callose synthase 4 (CALS4) (Arabidopsis thaliana (Mouse-ear cress)).